A 162-amino-acid polypeptide reads, in one-letter code: Peptide deformylase-like (162 aa).

The protein belongs to the polypeptide deformylase family.

This is Peptide deformylase-like from Staphylococcus aureus (strain COL).